The sequence spans 265 residues: Serine protease harobin (265 aa).

An N-terminal signal peptide occupies residues 1–18 (MPLIRVLASLLILQLSYG). The propeptide occupies 19 to 33 (KSLDNGAKAITSLDR). In terms of domain architecture, Peptidase S1 spans 34–257 (IIGGFECNPS…YKDWIEGIIA (224 aa)). 7 disulfides stabilise this stretch: cysteine 40/cysteine 172, cysteine 59/cysteine 75, cysteine 106/cysteine 152, cysteine 107/cysteine 264, cysteine 151/cysteine 218, cysteine 183/cysteine 197, and cysteine 208/cysteine 233. Histidine 74 functions as the Charge relay system in the catalytic mechanism. Asparagine 112 carries N-linked (GlcNAc...) asparagine glycosylation. The active-site Charge relay system is aspartate 119. Asparagine 130 is a glycosylation site (N-linked (GlcNAc...) asparagine). Catalysis depends on serine 212, which acts as the Charge relay system.

This sequence belongs to the peptidase S1 family. Snake venom subfamily. In terms of assembly, monomer. Post-translationally, harobin contains three additional Cys residues than other snake venom serine proteases, suggesting an additional disulfide bond. In addition, it is more stable than other snake 6-disulfide-bond serine proteases, since it is less sensitive to DTT. As to expression, expressed by the venom gland.

It is found in the secreted. With respect to regulation, inhibited by PMSF. Its function is as follows. Serine protein with fibrinolytic and fibrinogenolytic activities. Degrades Bbeta-chain (FGB) of fibrinogen first and then the Aalpha-chain (FGA). Gamma-chain (FGG) are also digested on prolonged incubation. In vitro, it cleaves high molecular weight (HMW) kininogen (KNG) releasing bradykinin that promotes vasodilation. In vitro and in vivo, it cleaves angiotensin-2 (AGT). This explains the reduction of blood pressure in hypertensive rats. Also has antithrombotic effects on thrombosis animal models. The chain is Serine protease harobin from Hydrophis hardwickii (Hardwick's spine-bellied seasnake).